The primary structure comprises 811 residues: Transmembrane protease serine 6 (811 aa).

The tract at residues 1 to 48 (MPRCFQLPCSTRMPTTEVPQAADGQGDAGDGEEAAEPEGKFKPPKNTK) is disordered. The Cytoplasmic portion of the chain corresponds to 1-59 (MPRCFQLPCSTRMPTTEVPQAADGQGDAGDGEEAAEPEGKFKPPKNTKRKNRDYVRFTP). Over residues 8–18 (PCSTRMPTTEV) the composition is skewed to polar residues. A helical; Signal-anchor for type II membrane protein membrane pass occupies residues 60 to 80 (LLLVLAALVSAGVMLWYFLGY). Residues 81–811 (KAEVTVSQVY…VINWIQQVLT (731 aa)) are Extracellular-facing. The SEA domain maps to 86–209 (VSQVYSGSLR…EGLVILEASV (124 aa)). 6 N-linked (GlcNAc...) asparagine glycosylation sites follow: Asn138, Asn184, Asn216, Asn338, Asn433, and Asn453. 2 consecutive CUB domains span residues 213 to 336 (VVLN…QDCQ) and 323 to 440 (FLLS…QISL). Cys335 and Cys366 are oxidised to a cystine. LDL-receptor class A domains lie at 445–477 (VQVY…CDGI), 478–514 (KDCP…DRQP), and 518–555 (NGSD…DGQS). 10 cysteine pairs are disulfide-bonded: Cys458-Cys470, Cys464-Cys480, Cys474-Cys489, Cys491-Cys503, Cys497-Cys516, Cys510-Cys525, Cys531-Cys543, Cys538-Cys557, Cys551-Cys566, and Cys602-Cys618. Asn518 carries an N-linked (GlcNAc...) asparagine glycan. The Peptidase S1 domain occupies 577-811 (IVGGTVSSEG…VINWIQQVLT (235 aa)). Residues His617 and Asp668 each act as charge relay system in the active site. 3 disulfides stabilise this stretch: Cys702/Cys768, Cys733/Cys747, and Cys758/Cys787. Ser762 functions as the Charge relay system in the catalytic mechanism.

The protein belongs to the peptidase S1 family. In terms of assembly, interacts with HJV. In terms of processing, the single-chain zymogen undergoes autoproteolytic processing. This results in TMPRSS6 shedding from the cell surface and conversion into an activated two-chains form which is released extracellularly. The process involves a trans-activation mechanism that requires TMPRSS6 oligomerization. In terms of tissue distribution, expressed at highest levels in adult mice liver, kidney and uterus. Also strongly expressed within the nasal cavity by olfactory epithelial cells. A weak, but detectable, signal in adult mice tissues analyzed including brain, lung, heart, kidney, spleen, muscle, intestine, thymus and pancreas. No signal in residual embryonic yolk sac, developing kidney tubules or in embryonic tissues analyzed including lung, heart, gastrointestinal tract and epithelium of the oral cavity.

The protein resides in the cell membrane. Its function is as follows. Membrane-bound serine protease. Through the cleavage of cell surface HJV, a regulator of the expression of the iron absorption-regulating hormone hepicidin/HAMP, plays a role in iron homeostasis. This chain is Transmembrane protease serine 6 (Tmprss6), found in Mus musculus (Mouse).